Consider the following 157-residue polypeptide: MAEKNERAIKVVAENRKARFNYAIDDTIEVGIALTGTEVKSIRNGKTTIAESYADARGSEIWLINANIPEYLQANRFNHEPKRPRKLLLHRKQINKLIGAVEREGMTLIPLKLYFNERGRAKLQLALAKGKKLHDKRETEKKRDWSREKGRLLRSRG.

The interval 132-157 (KLHDKRETEKKRDWSREKGRLLRSRG) is disordered. The segment covering 135–151 (DKRETEKKRDWSREKGR) has biased composition (basic and acidic residues).

The protein belongs to the SmpB family.

The protein localises to the cytoplasm. Its function is as follows. Required for rescue of stalled ribosomes mediated by trans-translation. Binds to transfer-messenger RNA (tmRNA), required for stable association of tmRNA with ribosomes. tmRNA and SmpB together mimic tRNA shape, replacing the anticodon stem-loop with SmpB. tmRNA is encoded by the ssrA gene; the 2 termini fold to resemble tRNA(Ala) and it encodes a 'tag peptide', a short internal open reading frame. During trans-translation Ala-aminoacylated tmRNA acts like a tRNA, entering the A-site of stalled ribosomes, displacing the stalled mRNA. The ribosome then switches to translate the ORF on the tmRNA; the nascent peptide is terminated with the 'tag peptide' encoded by the tmRNA and targeted for degradation. The ribosome is freed to recommence translation, which seems to be the essential function of trans-translation. In Rhodopseudomonas palustris (strain ATCC BAA-98 / CGA009), this protein is SsrA-binding protein.